Consider the following 826-residue polypeptide: DNA mismatch repair protein MutS (826 aa).

622–629 (GPNMAGKS) contributes to the ATP binding site.

The protein belongs to the DNA mismatch repair MutS family.

Functionally, this protein is involved in the repair of mismatches in DNA. It is possible that it carries out the mismatch recognition step. This protein has a weak ATPase activity. This Chlamydia abortus (strain DSM 27085 / S26/3) (Chlamydophila abortus) protein is DNA mismatch repair protein MutS.